The sequence spans 404 residues: Inner membrane transport protein YdiM (404 aa).

Residues 1–5 (MKNPY) lie on the Periplasmic side of the membrane. Residues 6 to 26 (FPTALGLYFNYLVHGMGVLLM) traverse the membrane as a helical segment. The Cytoplasmic portion of the chain corresponds to 27-43 (SLNMASLETLWQTNAAG). The helical transmembrane segment at 44–64 (VSIVISSLGIGRLSVLLFAGL) threads the bilayer. Topologically, residues 65–84 (LSDRFGRRPFIMLGMCCYMA) are periplasmic. The helical transmembrane segment at 85–105 (FFFGILQTNNIIIAYVFGFLA) threads the bilayer. The Cytoplasmic portion of the chain corresponds to 106–132 (GMANSFLDAGTYPSLMEAFPRSPGTAN). Residues 133-153 (ILIKAFVSSGQFLLPLIISLL) form a helical membrane-spanning segment. At 154 to 157 (VWAE) the chain is on the periplasmic side. Residues 158–178 (LWFGWSFMIAAGIMFINALFL) form a helical membrane-spanning segment. Topologically, residues 179–206 (YRCTFPPHPGRRLPVIKKTTSSTEHRCS) are cytoplasmic. Residues 207–227 (IIDLASYTLYGYISMATFYLV) form a helical membrane-spanning segment. Residues 228 to 246 (SQWLAQYGQFVAGMSYTMS) lie on the Periplasmic side of the membrane. The helical transmembrane segment at 247–267 (IKLLSIYTVGSLLCVFITAPL) threads the bilayer. Residues 268-273 (IRNTVR) are Cytoplasmic-facing. The chain crosses the membrane as a helical span at residues 274 to 294 (PTTLLMLYTFISFIALFTVCL). At 295-296 (HP) the chain is on the periplasmic side. The helical transmembrane segment at 297-317 (TFYVVIIFAFVIGFTSAGGVV) threads the bilayer. The Cytoplasmic portion of the chain corresponds to 318-336 (QIGLTLMAERFPYAKGKAT). A helical transmembrane segment spans residues 337–357 (GIYYSAGSIATFTIPLITAHL). The Periplasmic portion of the chain corresponds to 358–364 (SQRSIAD). A helical membrane pass occupies residues 365 to 385 (IMWFDTAIAAIGFLLALFIGL). The Cytoplasmic segment spans residues 386–404 (RSRKKTRHHSLKENVAPGG).

The protein belongs to the major facilitator superfamily.

Its subcellular location is the cell inner membrane. This chain is Inner membrane transport protein YdiM (ydiM), found in Escherichia coli (strain K12).